We begin with the raw amino-acid sequence, 634 residues long: MYDLLKTIDDPADLRRLDRRQLQPLADELRAFVLDSVSKTGGHLSSNLGTVELTIALHYVFNTPNDRIVWDVGHQTYPHKILTGRRDQMHSLRQYDGISGFPRRSESEYDTFGTAHSSTSISAALGMAIGSQLNGDDRFSIAVIGDGAMTAGMAFEAMNNAGVSEDAKLLVILNDNDMSISPPVGALNRHLARLMSGRFYAAARAGVERVLSVAPPVLELARKLEEHAKGMVVPATLFEEFGFNYIGPIDGHDLDSLIPTLQNIRELRGPQFLHVVTKKGQGYKLAEADPVLYHGPGKFNPAEGIKPSTTPAKKTYTQVFGEWLCDEAERDTRVVGITPAMREGSGMVEFEKRFKDRYYDVGIAEQHAVTFAGGLATEGLKPVVAIYSTFLQRAYDQLIHDVALQNLPVVFAIDRAGLVGADGATHAGAYDLAFMRCIPNMTIMAASDENECRQMLHTALQQPNPTAVRYPRGAGTGVATVKEFTEIPLGKGEVRRRTSQPEGKRVAILAFGTMVAPSLAAAEELDATVANMRFVKPVDAALVRELAETHDYVVTVEEGCVMGGAGSACVEALMESGVIRPVLQLGLPDLFIDHGDPAKLLSQCGLDGAGIAKSIRERFLNPAADVAGQAKRVA.

Thiamine diphosphate-binding positions include H74 and 115-117 (AHS). Residue D146 coordinates Mg(2+). Thiamine diphosphate contacts are provided by residues 147–148 (GA), N176, Y283, and E365. N176 serves as a coordination point for Mg(2+).

The protein belongs to the transketolase family. DXPS subfamily. In terms of assembly, homodimer. Mg(2+) serves as cofactor. Requires thiamine diphosphate as cofactor.

It carries out the reaction D-glyceraldehyde 3-phosphate + pyruvate + H(+) = 1-deoxy-D-xylulose 5-phosphate + CO2. It participates in metabolic intermediate biosynthesis; 1-deoxy-D-xylulose 5-phosphate biosynthesis; 1-deoxy-D-xylulose 5-phosphate from D-glyceraldehyde 3-phosphate and pyruvate: step 1/1. Functionally, catalyzes the acyloin condensation reaction between C atoms 2 and 3 of pyruvate and glyceraldehyde 3-phosphate to yield 1-deoxy-D-xylulose-5-phosphate (DXP). The sequence is that of 1-deoxy-D-xylulose-5-phosphate synthase from Burkholderia cenocepacia (strain ATCC BAA-245 / DSM 16553 / LMG 16656 / NCTC 13227 / J2315 / CF5610) (Burkholderia cepacia (strain J2315)).